The chain runs to 125 residues: MPPKDDKKKKDAGKSAKKDKDPVNKSGGKAKKKKWSKGKVRDKLNNLVLFDKATYDKLCKEVPNYKLITPAVVSERLKIRGSLARAALQELLSKGLIKLVSKHRAQVIYTRNTKGGDAPAAGEDA.

Positions 1–23 (MPPKDDKKKKDAGKSAKKDKDPV) are enriched in basic and acidic residues. Residues 1–38 (MPPKDDKKKKDAGKSAKKDKDPVNKSGGKAKKKKWSKG) form a disordered region. The segment covering 28 to 38 (GKAKKKKWSKG) has biased composition (basic residues). Residue lysine 43 is modified to N6-acetyllysine. Position 52 is an N6-acetyllysine; alternate (lysine 52). Position 52 is an N6-succinyllysine; alternate (lysine 52). N6-acetyllysine is present on residues lysine 60 and lysine 66. Lysine 94 is subject to N6-acetyllysine; alternate. Lysine 94 carries the post-translational modification N6-succinyllysine; alternate.

This sequence belongs to the eukaryotic ribosomal protein eS25 family. Component of the small ribosomal subunit.

It localises to the cytoplasm. Its function is as follows. Component of the small ribosomal subunit. The ribosome is a large ribonucleoprotein complex responsible for the synthesis of proteins in the cell. This Homo sapiens (Human) protein is Small ribosomal subunit protein eS25 (RPS25).